A 242-amino-acid chain; its full sequence is Megakaryocyte and platelet inhibitory receptor G6b (242 aa).

Residues 1–17 (MALVLPLLPLLLSKVQG) form the signal peptide. 2 N-linked (GlcNAc...) asparagine glycosylation sites follow: asparagine 32 and asparagine 112. A helical membrane pass occupies residues 141–161 (VLIPLLGVGLVLGLGVAGVVW). Short sequence motifs (ITIM motif) lie at residues 210-215 (LHYADL) and 236-241 (TVYAVV). Tyrosine 212 carries the phosphotyrosine modification.

Interacts (via ITIM motif) with PTPN6 and PTPN11. Binds to heparin. In terms of processing, N-glycosylated. May be O-glycosylated. Post-translationally, phosphorylated. Expressed in mature megakaryocytes and platelets. Not expressed by immature megakaryocytes.

It localises to the cell membrane. In terms of biological role, inhibitory receptor that acts as a critical regulator of hematopoietic lineage differentiation, megakaryocyte function and platelet production. Inhibits platelet aggregation and activation by agonists such as ADP and collagen-related peptide. This regulation of megakaryocate function as well as platelet production ann activation is done through the inhibition (via the 2 ITIM motifs) of the receptors CLEC1B and GP6:FcRgamma signaling. Appears to operate in a calcium-independent manner. The sequence is that of Megakaryocyte and platelet inhibitory receptor G6b from Mus musculus (Mouse).